The following is a 1444-amino-acid chain: MTAKEEEKQERFQLLMTQIGLQDVTTYEEFTKDAKIEKLVADKKNKTWQFHLHVPQIFPAALFHMMDVGMKRAFSQIAETEMQIVPENQTINETLIQEYWNLIVEPIGKQSPMIGKLLMEQKPTFKEPHFIEVAVHNDMEEATIQQRFQAKIIENYGKAGFPRLAMKMHMLDQSETDEYKAFAQAKQEEDQKKAAEAVQVMQKRQAEGQNGSANAAPLTGPFQIGYKIKDDEEIKRLGDVYDEERRITVQGLIFATEIRELRSGRSLLQFKITDYTSSMIIKMFSRDNEDAAMFQNLKKGMWVKVRGSVQNDTFVRDLIMMAQDINEIAGVKRLDTAEEKRAELHLHSPMSQMDATSSVDSLFKQAADWGHKAIAITDHSVAQSFPEAYGAGQKYGLKVIFGIEANLIDDGVPIAYNDQHIALEDATYCVFDVETTGLSAVYDTIIELAGVKMKNGEIIDKFEAFIDPGHPLSATTINLTGITDDMVKGSDPIDVVLKQFREWSGDDILVAHNASFDMGFINTAYEKVGLEKAKNAVVDTLELARFLYPHFKNHRLNTLTKKFNIILEQHHRAVFDAEATAYLAWKLIKDAKEMHDIEFHDSLNDYMGEGDAYKRARPFHATIYAQTDVGLKNLFKLITMSNINYFYRVPRIPRSQLKKMREGLIIGTACSQGELFEAMMQKGMQAAEKVAEFYDFIEVQPKPVYAPLIERELVRDEKALEEILKNIVRVGEKTGKPVVATGNVHYKDPVDKIYRKILIHSQGGANPLNRAELPDVHFRSTDEMLKEFAFLGEEKAKEIVVTNSNLVVDWMDDLKPIKDELYTPKIDGAEDEVRNMSYGMAHQLYGEKLPEIVEARLEKELKSIIGHGFAVIYLISHKLVKKSLVDGYLVGSRGSVGSSFVATMTEITEVNPLPPHYLCPNCKDSEFFDDGSVGSGFDLPDKDCPHCGTPYQKEGQDIPFETFLGFKGDKVPDIDLNFSGDYQPVAHAYTKEIFGEDYVFRAGTIGTVAEKTAFGYVRNYERDMNMTIRGAEVDRLVAGCTGVKRTTGQHPGGIIVIPDYMDVYDFTPVQFPADATDSEWKTTHFDFHSIHDNVLKLDILGHDDPTAIRMLQDLSGIDPKTIPTDDPDVMKLFGSTESLGVKPADIDSKTGTLGIPEFGTRFVRQMLEQTKPTTFSELVQISGLSHGTDVWLGNAEELIKNKTCELPDVIGCRDDIMVFLIYQGLESSLAFKIMESVRKGKGLTEEMEEAMIANKVPLWYIESCKKIKYMFPKAHAAAYVLMAVRIAYFKVHHPLYFYATYFTVRADDFDLTSMVNGKEAVKATMKEVNDKGMEASTKEKNLLTVLEIANEMLARGFHFQKVDLYKSSADEFIIDGDSLIPPFNAIPSLGTNVAKQIVAARENGEFLSKEDLQQRGKVSKTIIQYMDDQGCLEGLPDQNQLSLF.

The 157-residue stretch at tyrosine 428–alanine 584 folds into the Exonuclease domain.

This sequence belongs to the DNA polymerase type-C family. PolC subfamily.

The protein resides in the cytoplasm. It carries out the reaction DNA(n) + a 2'-deoxyribonucleoside 5'-triphosphate = DNA(n+1) + diphosphate. Required for replicative DNA synthesis. This DNA polymerase also exhibits 3' to 5' exonuclease activity. The protein is DNA polymerase III PolC-type of Listeria innocua serovar 6a (strain ATCC BAA-680 / CLIP 11262).